The following is a 78-amino-acid chain: Broad mercury transporter MerE (78 aa).

A run of 2 helical transmembrane segments spans residues Leu-19–Leu-39 and Phe-47–Val-67.

It localises to the cell inner membrane. Functionally, broad mercury transporter that mediates the transport of both CH(3)Hg(I) and Hg(II) across the membrane. The protein is Broad mercury transporter MerE of Shigella flexneri.